The primary structure comprises 56 residues: Large ribosomal subunit protein bL33 (56 aa).

This sequence belongs to the bacterial ribosomal protein bL33 family.

In Delftia acidovorans (strain DSM 14801 / SPH-1), this protein is Large ribosomal subunit protein bL33.